The following is a 529-amino-acid chain: DNA polymerase lambda (529 aa).

Residues 14 to 109 (DPEGMFAGMV…EKANEDLYVL (96 aa)) enclose the BRCT domain. Residues 119 to 199 (PKKSLPAISG…ESTSVYKPPD (81 aa)) form a disordered region. Polar residues predominate over residues 153–175 (SHSNTQGSPDSPTSCSVPSTSAS). A compositionally biased stretch (low complexity) spans 182-193 (ETPTSPQSESTS). Residues 213–227 (NIYRALGEDRRSFSY) are DNA-binding. H260 is a catalytic residue. The interval 295-298 (GPAT) is DNA-binding. DCTP contacts are provided by residues R336, 367 to 370 (SYRR), and 376 to 379 (GDLD). Residues 370-379 (RGKATCGDLD) form an involved in primer binding region. Mn(2+) contacts are provided by D377, D379, and D444. The interval 418–459 (EEGTDSGVDTYFGLCTYPGQELRRRIDFKVYPRDIYSFGLIA) is DNA-binding. Residue N467 coordinates dCTP.

This sequence belongs to the DNA polymerase type-X family. Interacts with the DNA repair proteins XRCC4 and LIG4. Interacts with HSP90-1. Requires Mn(2+) as cofactor.

Its subcellular location is the nucleus. The enzyme catalyses DNA(n) + a 2'-deoxyribonucleoside 5'-triphosphate = DNA(n+1) + diphosphate. Repair polymerase involved in base excision repair (BER) and responsible for repair of lesions that give rise to abasic (AP) sites in DNA. Has both DNA polymerase and terminal transferase activities. Has a 5'-deoxyribose-5-phosphate lyase (dRP lyase) activity. Involved in the repair of transposon-induced DNA double strand breaks (DSBs). Involved in repair of UV-B-mediated DNA damage during seedling development through an excision repair mechanism. Involved the repair of DSBs induced by high salinity and DNA cross-linking agent. Functions via the DNA non-homologous end joining (NHEJ) pathway. In Arabidopsis thaliana (Mouse-ear cress), this protein is DNA polymerase lambda.